Here is a 243-residue protein sequence, read N- to C-terminus: MQLAYFHVAADVPQGAEPDAAVVIDVLRATTTIAWALNNGAEAVETFADLDQLRQSAAQWPESSRLMLGERGGQRIEGFDLGNSPVAVVPEQVAGKRLFMSTTNGTRSLQRVRGVQRLFTLALPNRRAVADHLLMDPPEQLWIVGSGWEGAYSLEDSLAAGALADLLLNAAADEACVVNDELTAALALWQQWKHDPEACLRQASHGQRLIGLGDHDADFRCCAELDRLSVVPVQVKPGVLCAS.

Belongs to the ComB family. The cofactor is Mg(2+).

It catalyses the reaction (2R)-O-phospho-3-sulfolactate + H2O = (2R)-3-sulfolactate + phosphate. The chain is Probable 2-phosphosulfolactate phosphatase from Prochlorococcus marinus (strain MIT 9303).